A 264-amino-acid chain; its full sequence is MVKSHIGSWILVLFVAMWSDVGLCKKRPKPGGGWNTGGSRYPGQGSPGGNRYPPQGGGSWGQPHGGGWGQPHGGSWGQPHGGGWGQPHGGGWGQPHGGGGWGQGGTHGQWNKPSKPKTNMKHVAGAAAAGAVVGGLGGYMLGSAMNRPLIHFGNDYEDRYYRENMHRYPNQVYYRPVDQYSNQNNFVRDCVNITVKEHTVTTTTKGENFTETDIKMMERVVEQMCITQYQTESQAYYQRGASVVLFSSPPVVLLISFLIFLIVG.

Residues 1-24 (MVKSHIGSWILVLFVAMWSDVGLC) form the signal peptide. An interaction with GRB2, ERI3 and SYN1 region spans residues 25–241 (KKRPKPGGGW…ESQAYYQRGA (217 aa)). Residues 28 to 118 (PKPGGGWNTG…QWNKPSKPKT (91 aa)) are disordered. 6 repeat units span residues 54–62 (PQGGGSWGQ), 63–70 (PHGGGWGQ), 71–78 (PHGGSWGQ), 79–86 (PHGGGWGQ), 87–94 (PHGGGWGQ), and 95–103 (PHGGGGWGQ). A 6 X 8 AA tandem repeats of P-H-G-G-G-W-G-Q region spans residues 54 to 103 (PQGGGSWGQPHGGGWGQPHGGSWGQPHGGGWGQPHGGGWGQPHGGGGWGQ). A compositionally biased stretch (gly residues) spans 55 to 107 (QGGGSWGQPHGGGWGQPHGGSWGQPHGGGWGQPHGGGWGQPHGGGGWGQGGTH). His-72, Gly-73, Gly-74, His-80, Gly-81, Gly-82, His-88, Gly-89, Gly-90, His-96, Gly-98, and Gly-99 together coordinate Cu(2+). Cys-190 and Cys-225 are disulfide-bonded. Asn-192 and Asn-208 each carry an N-linked (GlcNAc...) asparagine glycan. Residue Ala-241 is the site of GPI-anchor amidated alanine attachment. Positions 242–264 (SVVLFSSPPVVLLISFLIFLIVG) are cleaved as a propeptide — removed in mature form.

This sequence belongs to the prion family. As to quaternary structure, monomer and homodimer. Has a tendency to aggregate into amyloid fibrils containing a cross-beta spine, formed by a steric zipper of superposed beta-strands. Soluble oligomers may represent an intermediate stage on the path to fibril formation. Copper binding may promote oligomerization. Interacts with GRB2, APP, ERI3/PRNPIP and SYN1. Mislocalized cytosolically exposed PrP interacts with MGRN1; this interaction alters MGRN1 subcellular location and causes lysosomal enlargement. Interacts with KIAA1191.

It localises to the cell membrane. The protein resides in the golgi apparatus. Its primary physiological function is unclear. Has cytoprotective activity against internal or environmental stresses. May play a role in neuronal development and synaptic plasticity. May be required for neuronal myelin sheath maintenance. May play a role in iron uptake and iron homeostasis. Soluble oligomers are toxic to cultured neuroblastoma cells and induce apoptosis (in vitro). Association with GPC1 (via its heparan sulfate chains) targets PRNP to lipid rafts. Also provides Cu(2+) or Zn(2+) for the ascorbate-mediated GPC1 deaminase degradation of its heparan sulfate side chains. This Boselaphus tragocamelus (Nilgai) protein is Major prion protein (PRNP).